The sequence spans 138 residues: Small ribosomal subunit protein uS11c (138 aa).

The interval 1–25 (MAKSIPRTGSRRNVRSGSRKSTRRI) is disordered. Basic residues predominate over residues 9 to 25 (GSRRNVRSGSRKSTRRI).

The protein belongs to the universal ribosomal protein uS11 family. As to quaternary structure, part of the 30S ribosomal subunit.

The protein localises to the plastid. It is found in the chloroplast. The polypeptide is Small ribosomal subunit protein uS11c (Eucalyptus globulus subsp. globulus (Tasmanian blue gum)).